The primary structure comprises 282 residues: Large ribosomal subunit protein uL2 (282 aa).

Disordered regions lie at residues 26–55 (KKSPEKSLLESQSHTAGRNNYGRMTVRHRG) and 218–266 (PHVR…HNKS). The span at 34 to 43 (LESQSHTAGR) shows a compositional bias: polar residues. A compositionally biased stretch (basic residues) spans 254-266 (TIGKKTRNKHNKS).

Belongs to the universal ribosomal protein uL2 family. Part of the 50S ribosomal subunit. Forms a bridge to the 30S subunit in the 70S ribosome.

In terms of biological role, one of the primary rRNA binding proteins. Required for association of the 30S and 50S subunits to form the 70S ribosome, for tRNA binding and peptide bond formation. It has been suggested to have peptidyltransferase activity; this is somewhat controversial. Makes several contacts with the 16S rRNA in the 70S ribosome. This chain is Large ribosomal subunit protein uL2, found in Pediococcus pentosaceus (strain ATCC 25745 / CCUG 21536 / LMG 10740 / 183-1w).